Consider the following 245-residue polypeptide: Pre-hexon-linking protein VIII (245 aa).

Residues 116–167 (LMVGRTEGRMQLAGGLTEGRVQLSGGFHGRPLVRGRSRRPPRWCGAELTGNG) constitute a propeptide that is removed on maturation.

Belongs to the adenoviridae hexon-linking protein family. Interacts with the peripentonal hexons as well as the hexons in the facets. Part of a complex composed of the core-capsid bridging protein, the endosome lysis protein VI and the hexon-linking protein VIII; these interactions bridge the virus core to the capsid. In terms of processing, cleaved by the viral protease during virion maturation. May cause the middle segment to be shed from the capsid.

The protein resides in the virion. Its subcellular location is the host nucleus. Structural component of the virion that acts as a cement protein on the capsid interior and which glue the peripentonal hexons and group-of-nine hexons together. The chain is Pre-hexon-linking protein VIII from Galliformes (FAdV-1).